Here is a 178-residue protein sequence, read N- to C-terminus: Aspartic proteinase nepenthesin-2 (178 aa).

Asp98 is a catalytic residue.

This sequence belongs to the peptidase A1 family.

It is found in the secreted. It carries out the reaction Similar to pepsin, but also cleaves on either side of Asp and at Lys-|-Arg.. Its activity is regulated as follows. Inhibited by pepstatin and by diazoacetyl-D,L-norleucine methyl ester (DAN) in the presence of Cu(2+) ions. Its function is as follows. Extracellular proteinase found in the pitcher fluid of carnivorous plants. Digest prey for nitrogen uptake. The chain is Aspartic proteinase nepenthesin-2 from Nepenthes distillatoria (Pitcher plant).